Here is an 822-residue protein sequence, read N- to C-terminus: Fibroblast growth factor receptor 1 (822 aa).

The first 21 residues, 1–21 (MWGWRGLLFWAVLVTATLCTA), serve as a signal peptide directing secretion. Residues 22–376 (RPAPTLPEQA…AVMTSPLYLE (355 aa)) are Extracellular-facing. The Ig-like C2-type 1 domain occupies 25-119 (PTLPEQAQPW…DTTYFSVNVS (95 aa)). An intrachain disulfide couples Cys-55 to Cys-101. 2 N-linked (GlcNAc...) asparagine glycosylation sites follow: Asn-77 and Asn-117. Positions 120–162 (DALPSSEDDDDDDDSSSEEKETDNTKPNRRPVAPYWTSPEKME) are disordered. Acidic residues predominate over residues 125–135 (SEDDDDDDDSS). The span at 136–145 (SEEKETDNTK) shows a compositional bias: basic and acidic residues. Ig-like C2-type domains follow at residues 158-246 (PEKM…YQLD) and 255-357 (PILQ…AWLT). The interval 160 to 177 (KMEKKLHAVPAAKTVKFK) is heparin-binding. Cys-178 and Cys-230 are oxidised to a cystine. N-linked (GlcNAc...) asparagine glycosylation is found at Asn-227, Asn-240, Asn-264, Asn-296, Asn-317, and Asn-330. Cys-277 and Cys-341 are joined by a disulfide. A helical transmembrane segment spans residues 377-397 (IIIYCTGAFLISCMVGSVIIY). The Cytoplasmic segment spans residues 398–822 (KMKSGTKKSD…QLANGGLNRR (425 aa)). Phosphotyrosine; by autocatalysis is present on Tyr-463. In terms of domain architecture, Protein kinase spans 478–767 (LVLGKPLGEG…VALTSNQEYL (290 aa)). Residues 484-490 (LGEGCFG), Lys-514, 562-564 (EYA), and Asn-568 contribute to the ATP site. 2 positions are modified to phosphotyrosine; by autocatalysis: Tyr-583 and Tyr-585. Catalysis depends on Asp-623, which acts as the Proton acceptor. 2 residues coordinate ATP: Arg-627 and Asp-641. Tyr-653, Tyr-654, Tyr-730, and Tyr-766 each carry phosphotyrosine; by autocatalysis. Residues 770 to 822 (SMPLDQDSPSFPDTRSSTCSSGEDSVFSHEPFPEEPCLPRHPTQLANGGLNRR) are disordered. Polar residues predominate over residues 776 to 792 (DSPSFPDTRSSTCSSGE).

Belongs to the protein kinase superfamily. Tyr protein kinase family. Fibroblast growth factor receptor subfamily. In terms of assembly, monomer. Homodimer after ligand binding. Interacts predominantly with FGF1 and FGF2, but can also interact with FGF3, FGF4, FGF5, FGF6, FGF8, FGF10, FGF19, FGF21, FGF22 and FGF23 (in vitro). Ligand specificity is determined by tissue-specific expression of isoforms, and differences in the third Ig-like domain are crucial for ligand specificity. Affinity for fibroblast growth factors (FGFs) is increased by heparan sulfate glycosaminoglycans that function as coreceptors. Likewise, KLB increases the affinity for FGF19, FGF21 and FGF23. Interacts (phosphorylated on Tyr-766) with PLCG1 (via SH2 domains). Interacts with FRS2. Interacts (via C-terminus) with NEDD4 (via WW3 domain). Interacts with RPS6KA1. Interacts with KL. Interacts with SHB (via SH2 domain) and GRB10. Interacts with ANOS1; this interaction does not interfere with FGF2-binding to FGFR1, but prevents binding of heparin-bound FGF2. Interacts with SOX2 and SOX3. Interacts with FLRT1, FLRT2 and FLRT3. Found in a ternary complex with FGF1 and ITGAV:ITGB3. In terms of processing, autophosphorylated. Binding of FGF family members together with heparan sulfate proteoglycan or heparin promotes receptor dimerization and autophosphorylation on tyrosine residues. Autophosphorylation occurs in trans between the two FGFR molecules present in the dimer and proceeds in a highly ordered manner. Initial autophosphorylation at Tyr-653 increases the kinase activity by a factor of 50 to 100. After this, Tyr-583 becomes phosphorylated, followed by phosphorylation of Tyr-463, Tyr-766, Tyr-583 and Tyr-585. In a third stage, Tyr-654 is autophosphorylated, resulting in a further tenfold increase of kinase activity. Phosphotyrosine residues provide docking sites for interacting proteins and so are crucial for FGFR1 function and its regulation. Post-translationally, ubiquitinated. FGFR1 is rapidly ubiquitinated by NEDD4 after autophosphorylation, leading to internalization and lysosomal degradation. CBL is recruited to activated FGFR1 via FRS2 and GRB2, and mediates ubiquitination and subsequent degradation of FGFR1. N-glycosylated in the endoplasmic reticulum. The N-glycan chains undergo further maturation to an Endo H-resistant form in the Golgi apparatus. As to expression, expressed in the parathyroid.

The protein localises to the cell membrane. It localises to the nucleus. The protein resides in the cytoplasm. Its subcellular location is the cytosol. It is found in the cytoplasmic vesicle. The catalysed reaction is L-tyrosyl-[protein] + ATP = O-phospho-L-tyrosyl-[protein] + ADP + H(+). Its activity is regulated as follows. Present in an inactive conformation in the absence of bound ligand. Ligand binding leads to dimerization and activation by sequential autophosphorylation on tyrosine residues. Its function is as follows. Tyrosine-protein kinase that acts as a cell-surface receptor for fibroblast growth factors and plays an essential role in the regulation of embryonic development, cell proliferation, differentiation and migration. Required for normal mesoderm patterning and correct axial organization during embryonic development, normal skeletogenesis and normal development of the gonadotropin-releasing hormone (GnRH) neuronal system. Phosphorylates PLCG1, FRS2, GAB1 and SHB. Ligand binding leads to the activation of several signaling cascades. Activation of PLCG1 leads to the production of the cellular signaling molecules diacylglycerol and inositol 1,4,5-trisphosphate. Phosphorylation of FRS2 triggers recruitment of GRB2, GAB1, PIK3R1 and SOS1, and mediates activation of RAS, MAPK1/ERK2, MAPK3/ERK1 and the MAP kinase signaling pathway, as well as of the AKT1 signaling pathway. Promotes phosphorylation of SHC1, STAT1 and PTPN11/SHP2. In the nucleus, enhances RPS6KA1 and CREB1 activity and contributes to the regulation of transcription. FGFR1 signaling is down-regulated by IL17RD/SEF, and by FGFR1 ubiquitination, internalization and degradation. The chain is Fibroblast growth factor receptor 1 (Fgfr1) from Rattus norvegicus (Rat).